The following is a 135-amino-acid chain: Putative pre-16S rRNA nuclease (135 aa).

Belongs to the YqgF nuclease family.

It localises to the cytoplasm. In terms of biological role, could be a nuclease involved in processing of the 5'-end of pre-16S rRNA. The protein is Putative pre-16S rRNA nuclease of Christiangramia forsetii (strain DSM 17595 / CGMCC 1.15422 / KT0803) (Gramella forsetii).